The primary structure comprises 354 residues: Uroporphyrinogen decarboxylase (354 aa).

Substrate contacts are provided by residues 27 to 31 (RQAGR), phenylalanine 46, aspartate 77, tyrosine 153, threonine 208, and histidine 326.

The protein belongs to the uroporphyrinogen decarboxylase family. As to quaternary structure, homodimer.

It is found in the cytoplasm. It catalyses the reaction uroporphyrinogen III + 4 H(+) = coproporphyrinogen III + 4 CO2. Its pathway is porphyrin-containing compound metabolism; protoporphyrin-IX biosynthesis; coproporphyrinogen-III from 5-aminolevulinate: step 4/4. In terms of biological role, catalyzes the decarboxylation of four acetate groups of uroporphyrinogen-III to yield coproporphyrinogen-III. This chain is Uroporphyrinogen decarboxylase, found in Neisseria meningitidis serogroup A / serotype 4A (strain DSM 15465 / Z2491).